Consider the following 172-residue polypeptide: Spermidine/spermine N(1)-acetyltransferase (172 aa).

The N-acetyltransferase domain maps to 3-172 (VKMKKCSRED…TDLIMAKTLI (170 aa)). Residues 96–98 (IYI), 105–109 (HGLGK), and 135–137 (NEN) contribute to the acetyl-CoA site. The active-site Proton donor is the Y142. K144 lines the acetyl-CoA pocket.

This sequence belongs to the acetyltransferase family. Monomer.

It carries out the reaction an alkane-alpha,omega-diamine + acetyl-CoA = an N-acetylalkane-alpha,omega-diamine + CoA + H(+). Functionally, involved in the protection against polyamine toxicity by regulating their concentration. Could also be involved in the negative control of sporulation as well as production of degradative enzymes such as alpha-amylase, levansucrase and alkaline phosphatase. Catalyzes the transfer of an acetyl group from acetyl coenzyme A (AcCoA) to an acceptor substrate and releases both CoA and the acetylated product. It possesses N1-acetyltransferase activity toward polyamine substrates including spermidine, spermine, aminopropylcadaverine, norspermidine, homospermidine, N(8)-acetylspermidine, diaminopropane and agmatine. The sequence is that of Spermidine/spermine N(1)-acetyltransferase from Bacillus subtilis (strain 168).